The chain runs to 461 residues: Photosystem II CP43 reaction center protein (461 aa).

Positions M1–E2 are excised as a propeptide. At T3 the chain carries N-acetylthreonine. T3 is modified (phosphothreonine). A run of 5 helical transmembrane segments spans residues L57–A81, L122–N143, K166–T188, Q243–S263, and W279–S300. E355 contacts [CaMn4O5] cluster. A helical transmembrane segment spans residues R435 to P459.

This sequence belongs to the PsbB/PsbC family. PsbC subfamily. PSII is composed of 1 copy each of membrane proteins PsbA, PsbB, PsbC, PsbD, PsbE, PsbF, PsbH, PsbI, PsbJ, PsbK, PsbL, PsbM, PsbT, PsbX, PsbY, PsbZ, Psb30/Ycf12, at least 3 peripheral proteins of the oxygen-evolving complex and a large number of cofactors. It forms dimeric complexes. Binds multiple chlorophylls and provides some of the ligands for the Ca-4Mn-5O cluster of the oxygen-evolving complex. It may also provide a ligand for a Cl- that is required for oxygen evolution. PSII binds additional chlorophylls, carotenoids and specific lipids. serves as cofactor.

It is found in the plastid. It localises to the chloroplast thylakoid membrane. In terms of biological role, one of the components of the core complex of photosystem II (PSII). It binds chlorophyll and helps catalyze the primary light-induced photochemical processes of PSII. PSII is a light-driven water:plastoquinone oxidoreductase, using light energy to abstract electrons from H(2)O, generating O(2) and a proton gradient subsequently used for ATP formation. The sequence is that of Photosystem II CP43 reaction center protein from Stigeoclonium helveticum (Green alga).